The primary structure comprises 98 residues: Large ribosomal subunit protein uL23c (98 aa).

The protein belongs to the universal ribosomal protein uL23 family. In terms of assembly, part of the 50S ribosomal subunit.

The protein localises to the plastid. Functionally, binds to 23S rRNA. The sequence is that of Large ribosomal subunit protein uL23c (rpl23) from Euglena longa (Euglenophycean alga).